The sequence spans 103 residues: Non-histone chromosomal protein 6 (103 aa).

2 disordered regions span residues 1–30 (MPKA…KRGL) and 70–103 (KQRA…EESS). The segment at residues 26 to 94 (PKRGLSAYMF…RYEDEKQAYN (69 aa)) is a DNA-binding region (HMG box). Residues 70–91 (KQRAPYEAKAAADKKRYEDEKQ) are compositionally biased toward basic and acidic residues.

The protein belongs to the NHP6 family. Weakly associates with the stable heterodimer of ctc-1/pob3 and ctc-2/spt16 to form the FACT complex.

The protein resides in the nucleus. The protein localises to the chromosome. Functionally, DNA-binding protein that induces severe bending of DNA. Required for DNA-binding by the FACT complex, a general chromatin factor that acts to reorganize nucleosomes. The FACT complex is involved in multiple processes that require DNA as a template such as mRNA elongation, DNA replication and DNA repair. Also augments the fidelity of transcription by RNA polymerase III independently of any role in the FACT complex. The sequence is that of Non-histone chromosomal protein 6 (nhp-1) from Neurospora crassa (strain ATCC 24698 / 74-OR23-1A / CBS 708.71 / DSM 1257 / FGSC 987).